Here is a 437-residue protein sequence, read N- to C-terminus: Phosphoglucosamine mutase (437 aa).

Catalysis depends on Ser-101, which acts as the Phosphoserine intermediate. Mg(2+)-binding residues include Ser-101, Asp-234, Asp-236, and Asp-238. Position 101 is a phosphoserine (Ser-101).

The protein belongs to the phosphohexose mutase family. It depends on Mg(2+) as a cofactor. In terms of processing, activated by phosphorylation.

The enzyme catalyses alpha-D-glucosamine 1-phosphate = D-glucosamine 6-phosphate. Functionally, catalyzes the conversion of glucosamine-6-phosphate to glucosamine-1-phosphate. The protein is Phosphoglucosamine mutase of Thermus thermophilus (strain ATCC BAA-163 / DSM 7039 / HB27).